Here is a 659-residue protein sequence, read N- to C-terminus: Pheromone-processing carboxypeptidase kex1 (659 aa).

Residues 1-38 form the signal peptide; that stretch reads MAATTTTTNAGRSMASWKRLSTLIAAFTLSWTSSFVAA. The Lumenal portion of the chain corresponds to 39 to 527; sequence AGSADYFVHD…EMAKWEAYRK (489 aa). Ser190 is an active-site residue. Asn218 and Asn348 each carry an N-linked (GlcNAc...) asparagine glycan. Asp393 is an active-site residue. N-linked (GlcNAc...) asparagine glycans are attached at residues Asn444 and Asn452. Residue His455 is part of the active site. Residues 480–507 are disordered; that stretch reads IGGQPTDSRLDGEKLPETTVGGAAGNST. Asn505 is a glycosylation site (N-linked (GlcNAc...) asparagine). Residues 528–548 traverse the membrane as a helical segment; the sequence is SGELVLVIVIVAAGVWGWFVW. Topologically, residues 549–659 are cytoplasmic; it reads KERRKTAGQG…SSSRQPGGRS (111 aa). The tract at residues 565–659 is disordered; it reads GERHSISNNP…SSSRQPGGRS (95 aa). The segment covering 616–630 has biased composition (basic and acidic residues); it reads DDLHLSKPEDPHADS. The segment covering 649 to 659 has biased composition (polar residues); the sequence is GSSSRQPGGRS.

The protein belongs to the peptidase S10 family.

The protein resides in the golgi apparatus. It is found in the trans-Golgi network membrane. It catalyses the reaction Preferential release of a C-terminal arginine or lysine residue.. Protease with a carboxypeptidase B-like function involved in the C-terminal processing of the lysine and arginine residues from protein precursors. Promotes cell fusion and is involved in the programmed cell death. This Neurospora crassa (strain ATCC 24698 / 74-OR23-1A / CBS 708.71 / DSM 1257 / FGSC 987) protein is Pheromone-processing carboxypeptidase kex1 (kex1).